The following is a 106-amino-acid chain: PTS system fructose-like EIIB component 2 (106 aa).

The PTS EIIB type-2 domain occupies 1 to 103 (MTKIIAVTAC…IMSKIEAHLA (103 aa)). The active-site Phosphocysteine intermediate is the Cys-10. Cys-10 carries the post-translational modification Phosphocysteine; by EIIA.

The protein resides in the cytoplasm. The catalysed reaction is D-fructose(out) + N(pros)-phospho-L-histidyl-[protein] = D-fructose 1-phosphate(in) + L-histidyl-[protein]. The phosphoenolpyruvate-dependent sugar phosphotransferase system (sugar PTS), a major carbohydrate active transport system, catalyzes the phosphorylation of incoming sugar substrates concomitantly with their translocation across the cell membrane. The enzyme II FrwABC PTS system is involved in fructose transport. The chain is PTS system fructose-like EIIB component 2 (frwB) from Escherichia coli O157:H7.